We begin with the raw amino-acid sequence, 233 residues long: ATP synthase subunit a (233 aa).

6 helical membrane passes run alanine 27–leucine 47, tyrosine 85–valine 105, valine 114–valine 134, leucine 143–valine 163, valine 189–valine 209, and serine 210–alanine 230.

The protein belongs to the ATPase A chain family. F-type ATPases have 2 components, CF(1) - the catalytic core - and CF(0) - the membrane proton channel. CF(1) has five subunits: alpha(3), beta(3), gamma(1), delta(1), epsilon(1). CF(0) has three main subunits: a(1), b(2) and c(9-12). The alpha and beta chains form an alternating ring which encloses part of the gamma chain. CF(1) is attached to CF(0) by a central stalk formed by the gamma and epsilon chains, while a peripheral stalk is formed by the delta and b chains.

The protein resides in the cell inner membrane. In terms of biological role, key component of the proton channel; it plays a direct role in the translocation of protons across the membrane. This Solibacter usitatus (strain Ellin6076) protein is ATP synthase subunit a.